The sequence spans 278 residues: MSLQELCRKNLPDCELPEFFDDYVLQLLGLHWQDHGSLQRTGKNQVLVQQEPIHINEALKSAASEGNYEIVELLLSWEADPRYAVVGALESNYYDLVHKYYDQVKDCHDMLPLIQNPEMFEKCHELNNTCSLKCLFKHAVIHDMLPILQKYSDYLDGWQYCNQILFELACKRQKYNMVVWIEGVLGVGNFKILFTIAINNRDLQLYSLGYLIILERLYSCGQDPTFLLNHFLRDVSMKGLLPFVLKTIEFGGSKEIAITLAKKYQHKHILKYFETEEC.

Belongs to the asfivirus MGF 505 family.

Its function is as follows. Plays a role in virus cell tropism, and may be required for efficient virus replication in macrophages. The polypeptide is Protein MGF 505-3R (African swine fever virus (isolate Tick/Malawi/Lil 20-1/1983) (ASFV)).